Consider the following 242-residue polypeptide: tRNA pseudouridine synthase A (242 aa).

The active-site Nucleophile is the Asp-51. Tyr-107 serves as a coordination point for substrate.

This sequence belongs to the tRNA pseudouridine synthase TruA family. In terms of assembly, homodimer.

It catalyses the reaction uridine(38/39/40) in tRNA = pseudouridine(38/39/40) in tRNA. Functionally, formation of pseudouridine at positions 38, 39 and 40 in the anticodon stem and loop of transfer RNAs. This chain is tRNA pseudouridine synthase A, found in Helicobacter pylori (strain P12).